Reading from the N-terminus, the 244-residue chain is Agamous-like MADS-box protein MADS3 (244 aa).

Residues 1–61 form the MADS-box domain; it reads MGRGRVELKR…GKLYEFGSAG (61 aa). The K-box domain occupies 85 to 175; the sequence is TQSWYQEVSK…KLKLEAEGQS (91 aa). Residues 180 to 206 are disordered; it reads QGSWNPSTATAGNSSFPVHPSQSNPMD. Residues 181–204 show a composition bias toward polar residues; sequence GSWNPSTATAGNSSFPVHPSQSNP.

Expressed in flowers and seeds.

Its subcellular location is the nucleus. Functionally, probable transcription factor involved in flower development. The chain is Agamous-like MADS-box protein MADS3 from Vitis vinifera (Grape).